The sequence spans 582 residues: Vesicular glutamate transporter 2 (582 aa).

The Cytoplasmic portion of the chain corresponds to 1-71 (MESVKQRILA…CTCFGLPRRY (71 aa)). A helical membrane pass occupies residues 72–92 (IIAIMSGLGFCISFGIRCNLG). Over 93–125 (VAIVDMVNNSTIHRGGKVIKEKAKFNWDPETVG) the chain is Vesicular. N-linked (GlcNAc...) asparagine glycosylation is found at asparagine 100 and asparagine 101. A helical membrane pass occupies residues 126-146 (MIHGSFFWGYIITQIPGGYIA). The Cytoplasmic segment spans residues 147–148 (SR). The helical transmembrane segment at 149–169 (LAANRVFGAAILLTSTLNMLI) threads the bilayer. Residues 170–177 (PSAARVHY) are Vesicular-facing. A helical transmembrane segment spans residues 178 to 198 (GCVIFVRILQGLVEGVTYPAC). At 199 to 216 (HGIWSKWAPPLERSRLAT) the chain is on the cytoplasmic side. The helical transmembrane segment at 217–237 (TSFCGSYAGAVIAMPLAGILV) threads the bilayer. Topologically, residues 238 to 244 (QYTGWSS) are vesicular. Residues 245 to 265 (VFYVYGSFGMVWYMFWLLVSY) form a helical membrane-spanning segment. The Cytoplasmic segment spans residues 266-310 (ESPAKHPTITDEERRYIEESIGESANLLGAMEKFKTPWRKFFTSM). Residues 311 to 331 (PVYAIIVANFCRSWTFYLLLI) traverse the membrane as a helical segment. Residues 332-349 (SQPAYFEEVFGFEISKVG) lie on the Vesicular side of the membrane. The helical transmembrane segment at 350–370 (MLSAVPHLVMTIIVPIGGQIA) threads the bilayer. At 371 to 386 (DFLRSKQILSTTTVRK) the chain is on the cytoplasmic side. The chain crosses the membrane as a helical span at residues 387-407 (IMNCGGFGMEATLLLVVGYSH). The Vesicular segment spans residues 408–409 (TR). Residues 410–430 (GVAISFLVLAVGFSGFAISGF) form a helical membrane-spanning segment. Topologically, residues 431–443 (NVNHLDIAPRYAS) are cytoplasmic. Residues 444-464 (ILMGISDGVGTLSGMVCPIIV) traverse the membrane as a helical segment. The Vesicular portion of the chain corresponds to 465–477 (GAMTKNKSREEWQ). Asparagine 470 is a glycosylation site (N-linked (GlcNAc...) asparagine). The chain crosses the membrane as a helical span at residues 478–498 (YVFLIAALVHYGGVIFYALFA). At 499-582 (SGEKQPWADP…YTYKDRDDYS (84 aa)) the chain is on the cytoplasmic side.

Belongs to the major facilitator superfamily. Sodium/anion cotransporter family. VGLUT subfamily. Expressed in brain. Expressed in hippocampal neurons (at protein level).

The protein resides in the cytoplasmic vesicle. It is found in the secretory vesicle. The protein localises to the synaptic vesicle membrane. Its subcellular location is the synapse. It localises to the synaptosome. The protein resides in the cell membrane. The enzyme catalyses L-glutamate(out) = L-glutamate(in). It catalyses the reaction K(+)(in) + H(+)(out) = K(+)(out) + H(+)(in). It carries out the reaction 3 Na(+)(out) + phosphate(out) = 3 Na(+)(in) + phosphate(in). The catalysed reaction is phosphate(in) = phosphate(out). The enzyme catalyses chloride(in) = chloride(out). Its activity is regulated as follows. Chloride channel activity is allosterically activated by lumenal H(+) and Cl(-) leading to synaptic vesicles acidification. The L-glutamate transport activity is allosterically activated by lumenal H(+) and Cl(-). The allosteric requirement for H(+) efficiently prevents non-vesicular efflux across the plasma membrane. The L-glutamate uniporter activity exhibits a biphasic dependence on chloride concentration. In terms of biological role, multifunctional transporter that transports L-glutamate as well as multiple ions such as chloride, proton, potassium, sodium and phosphate. At the synaptic vesicle membrane, mainly functions as a uniporter which transports preferentially L-glutamate but also, phosphate from the cytoplasm into synaptic vesicles at presynaptic nerve terminals of excitatory neural cells. The L-glutamate or phosphate uniporter activity is electrogenic and is driven by the proton electrochemical gradient, mainly by the electrical gradient established by the vacuolar H(+)-ATPase across the synaptic vesicle membrane. In addition, functions as a chloride channel that allows a chloride permeation through the synaptic vesicle membrane therefore affects the proton electrochemical gradient and promotes synaptic vesicles acidification. Moreover, functions as a vesicular K(+)/H(+) antiport allowing to maintain the electrical gradient and to decrease chemical gradient and therefore sustain vesicular glutamate uptake. The vesicular H(+)/H(+) antiport activity is electroneutral. At the plasma membrane, following exocytosis, functions as a symporter of Na(+) and phosphate from the extracellular space to the cytoplasm allowing synaptic phosphate homeostasis regulation. The symporter activity is driven by an inside negative membrane potential and is electrogenic. Also involved in the regulation of retinal hyaloid vessel regression during postnatal development. May also play a role in the endocrine glutamatergic system of other tissues such as pineal gland and pancreas. This is Vesicular glutamate transporter 2 from Mus musculus (Mouse).